A 273-amino-acid polypeptide reads, in one-letter code: Holocytochrome c-type synthase (273 aa).

The segment covering methionine 1–proline 18 has biased composition (low complexity). The disordered stretch occupies residues methionine 1–arginine 39. HRM repeat units lie at residues glutamate 30–glutamine 35 and glycine 40–methionine 45.

It belongs to the cytochrome c-type heme lyase family.

The protein localises to the mitochondrion inner membrane. The catalysed reaction is holo-[cytochrome c] = apo-[cytochrome c] + heme b. Lyase that catalyzes the covalent linking of the heme group to the cytochrome C apoprotein to produce the mature functional cytochrome. In Gallus gallus (Chicken), this protein is Holocytochrome c-type synthase (HCCS).